A 565-amino-acid polypeptide reads, in one-letter code: NAD-dependent malic enzyme (565 aa).

Tyrosine 104 acts as the Proton donor in catalysis. NAD(+) is bound at residue arginine 157. The Proton acceptor role is filled by lysine 175. A divalent metal cation contacts are provided by glutamate 246, aspartate 247, and aspartate 270. NAD(+) is bound by residues aspartate 270 and asparagine 418.

The protein belongs to the malic enzymes family. In terms of assembly, homotetramer. Mg(2+) serves as cofactor. It depends on Mn(2+) as a cofactor.

The catalysed reaction is (S)-malate + NAD(+) = pyruvate + CO2 + NADH. The enzyme catalyses oxaloacetate + H(+) = pyruvate + CO2. The protein is NAD-dependent malic enzyme of Salmonella dublin (strain CT_02021853).